We begin with the raw amino-acid sequence, 437 residues long: GTPase Der (437 aa).

2 consecutive EngA-type G domains span residues 4–167 (PIVA…PDNA) and 175–352 (IHFS…QHHR). GTP contacts are provided by residues 10–17 (GRPNVGKS), 57–61 (DTGGI), 119–122 (NKVD), 181–188 (GRPNVGKS), 229–233 (DTAGI), and 294–297 (NKWD). One can recognise a KH-like domain in the interval 353–437 (QRIQSAVLND…PIHLIKRQRQ (85 aa)).

Belongs to the TRAFAC class TrmE-Era-EngA-EngB-Septin-like GTPase superfamily. EngA (Der) GTPase family. Associates with the 50S ribosomal subunit.

GTPase that plays an essential role in the late steps of ribosome biogenesis. The sequence is that of GTPase Der from Limosilactobacillus reuteri (strain DSM 20016) (Lactobacillus reuteri).